The chain runs to 212 residues: Thymidylate kinase (212 aa).

Position 11–18 (11–18 (GIEGSGKT)) interacts with ATP.

Belongs to the thymidylate kinase family.

The enzyme catalyses dTMP + ATP = dTDP + ADP. Its function is as follows. Phosphorylation of dTMP to form dTDP in both de novo and salvage pathways of dTTP synthesis. The sequence is that of Thymidylate kinase from Buchnera aphidicola subsp. Baizongia pistaciae (strain Bp).